Here is a 446-residue protein sequence, read N- to C-terminus: StAR-related lipid transfer protein 3 (446 aa).

The Cytoplasmic portion of the chain corresponds to 1 to 52; it reads MSKRPGDLACDLERSLPALASLGTSLSHSQSLSSHFIPPPLEKRRAISDVRR. The MENTAL domain occupies 47–218; the sequence is ISDVRRTFCL…YSPPESFAGS (172 aa). Residues 53–73 form a helical membrane-spanning segment; the sequence is TFCLFVTFDLLFISLLWIIEL. Topologically, residues 74–95 are extracellular; sequence NTNTGIRKNLEQEVIHYSFQSS. Residues 96–116 form a helical membrane-spanning segment; it reads FFDIFVLAFFRFSGLLLGYAV. Residues 117-121 are Cytoplasmic-facing; sequence LRLQH. The helical transmembrane segment at 122–142 threads the bilayer; sequence WWVIAVTTLVSSAFLIVKVIL. Topologically, residues 143–149 are extracellular; it reads SELLSKG. Residues 150-170 form a helical membrane-spanning segment; sequence AFGYLLPIVSFVLAWLETWFL. The Cytoplasmic segment spans residues 171 to 446; that stretch reads DFKVLPQEAE…QRVGELGARA (276 aa). Residues 207-213 carry the FFAT motif; the sequence is QFYSPPE. Ser210, Ser218, and Ser222 each carry phosphoserine. The START domain maps to 231–444; that stretch reads SFSAQEREYI…LRQRVGELGA (214 aa).

The protein belongs to the STARD3 family. In terms of assembly, homodimer. Interacts (via the MENTAL domain) with STARD3NL. Interacts (via phosphorylated FFAT motif) with VAPA (via MSP domain). Interacts (via phosphorylated FFAT motif) with VAPB (via MSP domain). Interacts (via phosphorylated FFAT motif) with MOSPD2 (via MSP domain); this interaction allows enrichment of MOSPD2 around endosomes. In terms of processing, phosphorylation at Ser-210 is necessary and sufficient for the direct interaction of the phosphorylated FFAT motif with the MSP domain of MOSPD2, VAPA and VAPB and allows the tethering of two membranes that participates in the formation of ER-endosome contacts. Phosphorylation of the FFAT motif leads to conformation changes. Additional phosphorylations around the core FFAT motif (QFYSPPE) are not essential but strengthen the interaction with MOSPD2, VAPA and VAPB. Phosphorylation at Ser-210 of FFAT motif drives membrane tethering between the endoplasmic reticulum and late endosomes via interaction with VAPA and VAPB that in turn allows the efficient transport of sterol mediated by the START domain.

The protein resides in the late endosome membrane. The enzyme catalyses cholesterol(in) = cholesterol(out). In terms of biological role, sterol-binding protein that mediates cholesterol transport from the endoplasmic reticulum to endosomes. The sterol transport mechanism is triggered by phosphorylation of FFAT motif that leads to membrane tethering between the endoplasmic reticulum and late endosomes via interaction with VAPA and VAPB. Acts as a lipid transfer protein that redirects sterol to the endosome at the expense of the cell membrane and favors membrane formation inside endosomes. May also mediate cholesterol transport between other membranes, such as mitochondria membrane or cell membrane. However, such results need additional experimental evidences; probably mainly mediates cholesterol transport from the endoplasmic reticulum to endosomes. Does not activate transcriptional cholesterol sensing. Able to bind other lipids, such as lutein, a xanthophyll carotenoids that form the macular pigment of the retina. The polypeptide is StAR-related lipid transfer protein 3 (Mus musculus (Mouse)).